We begin with the raw amino-acid sequence, 217 residues long: Adenylate kinase (217 aa).

10 to 15 (GAGKGT) is a binding site for ATP. The NMP stretch occupies residues 30–59 (STGDMLRAAVKAGSPLGVKVKDIMASGQLV). Residues Thr31, Arg36, 57 to 59 (QLV), 85 to 88 (GFPR), and Gln92 each bind AMP. An LID region spans residues 122-159 (GRRVHEASGRIYHVTHNPPKTEGVDDITGEPLVQRDDD). ATP is bound by residues Arg123 and 132 to 133 (IY). AMP is bound by residues Arg156 and Arg167. Gly202 contributes to the ATP binding site.

Belongs to the adenylate kinase family. As to quaternary structure, monomer.

The protein resides in the cytoplasm. The enzyme catalyses AMP + ATP = 2 ADP. It participates in purine metabolism; AMP biosynthesis via salvage pathway; AMP from ADP: step 1/1. Functionally, catalyzes the reversible transfer of the terminal phosphate group between ATP and AMP. Plays an important role in cellular energy homeostasis and in adenine nucleotide metabolism. The sequence is that of Adenylate kinase from Teredinibacter turnerae (strain ATCC 39867 / T7901).